The sequence spans 473 residues: Fumarate hydratase class II (473 aa).

Substrate contacts are provided by residues 105–107 (SGT), 130–133 (HPND), 140–142 (SSN), and Thr-188. His-189 acts as the Proton donor/acceptor in catalysis. Ser-319 is an active-site residue. Substrate is bound by residues Ser-320 and 325–327 (KVN).

This sequence belongs to the class-II fumarase/aspartase family. Fumarase subfamily. Homotetramer.

It localises to the cytoplasm. The catalysed reaction is (S)-malate = fumarate + H2O. The protein operates within carbohydrate metabolism; tricarboxylic acid cycle; (S)-malate from fumarate: step 1/1. Functionally, involved in the TCA cycle. Catalyzes the stereospecific interconversion of fumarate to L-malate. The chain is Fumarate hydratase class II from Xylella fastidiosa (strain 9a5c).